An 85-amino-acid chain; its full sequence is Small ribosomal subunit protein uS17 (85 aa).

Belongs to the universal ribosomal protein uS17 family. Part of the 30S ribosomal subunit.

One of the primary rRNA binding proteins, it binds specifically to the 5'-end of 16S ribosomal RNA. The polypeptide is Small ribosomal subunit protein uS17 (Haemophilus influenzae (strain 86-028NP)).